The chain runs to 338 residues: Lipoate-protein ligase A (338 aa).

Residues 29 to 216 (PATQRVLFLW…AFFAHYGERI (188 aa)) enclose the BPL/LPL catalytic domain. Residues Arg-71, 76-79 (GAVF), and Lys-134 contribute to the ATP site. Position 134 (Lys-134) interacts with (R)-lipoate.

Belongs to the LplA family. As to quaternary structure, monomer.

The protein localises to the cytoplasm. It carries out the reaction L-lysyl-[lipoyl-carrier protein] + (R)-lipoate + ATP = N(6)-[(R)-lipoyl]-L-lysyl-[lipoyl-carrier protein] + AMP + diphosphate + H(+). It participates in protein modification; protein lipoylation via exogenous pathway; protein N(6)-(lipoyl)lysine from lipoate: step 1/2. Its pathway is protein modification; protein lipoylation via exogenous pathway; protein N(6)-(lipoyl)lysine from lipoate: step 2/2. Functionally, catalyzes both the ATP-dependent activation of exogenously supplied lipoate to lipoyl-AMP and the transfer of the activated lipoyl onto the lipoyl domains of lipoate-dependent enzymes. This chain is Lipoate-protein ligase A, found in Salmonella typhi.